A 468-amino-acid polypeptide reads, in one-letter code: Glutamate--tRNA ligase (468 aa).

The 'HIGH' region motif lies at 8–18 (PSPTGDPHVGT). A 'KMSKS' region motif is present at residues 243-247 (KISKR). An ATP-binding site is contributed by Lys246.

The protein belongs to the class-I aminoacyl-tRNA synthetase family. Glutamate--tRNA ligase type 1 subfamily. As to quaternary structure, monomer.

The protein resides in the cytoplasm. It catalyses the reaction tRNA(Glu) + L-glutamate + ATP = L-glutamyl-tRNA(Glu) + AMP + diphosphate. Its function is as follows. Catalyzes the attachment of glutamate to tRNA(Glu) in a two-step reaction: glutamate is first activated by ATP to form Glu-AMP and then transferred to the acceptor end of tRNA(Glu). This Thermus thermophilus (strain ATCC BAA-163 / DSM 7039 / HB27) protein is Glutamate--tRNA ligase.